The chain runs to 273 residues: NAD-dependent protein deacylase (273 aa).

Residues 20–272 (RERLRQRIFF…PEFVEKLLKG (253 aa)) form the Deacetylase sirtuin-type domain. An NAD(+)-binding site is contributed by 48 to 67 (GAGISAESGIRTFRAADGLW). Substrate-binding residues include Tyr92 and Arg95. Residue 129 to 132 (QNID) coordinates NAD(+). The active-site Proton acceptor is His147. The Zn(2+) site is built by Cys155 and Cys174. NAD(+) is bound by residues 214 to 216 (GTS), 240 to 242 (NLE), and Ala258.

The protein belongs to the sirtuin family. Class III subfamily. The cofactor is Zn(2+).

It is found in the cytoplasm. It carries out the reaction N(6)-acetyl-L-lysyl-[protein] + NAD(+) + H2O = 2''-O-acetyl-ADP-D-ribose + nicotinamide + L-lysyl-[protein]. The enzyme catalyses N(6)-succinyl-L-lysyl-[protein] + NAD(+) + H2O = 2''-O-succinyl-ADP-D-ribose + nicotinamide + L-lysyl-[protein]. The catalysed reaction is N(6)-(2-hydroxyisobutanoyl)-L-lysyl-[protein] + NAD(+) + H2O = 2''-O-(2-hydroxyisobutanoyl)-ADP-D-ribose + nicotinamide + L-lysyl-[protein]. NAD-dependent lysine deacetylase that specifically removes acetyl groups on target proteins. Also acts as a protein-lysine deacylase by mediating protein desuccinylation and de-2-hydroxyisobutyrylation. Modulates the activities of several proteins which are inactive in their acylated form. This chain is NAD-dependent protein deacylase, found in Escherichia coli O157:H7.